A 285-amino-acid polypeptide reads, in one-letter code: Bifunctional protein FolD (285 aa).

NADP(+) is bound by residues 165-167 (GRS) and Ser-190.

This sequence belongs to the tetrahydrofolate dehydrogenase/cyclohydrolase family. As to quaternary structure, homodimer.

The catalysed reaction is (6R)-5,10-methylene-5,6,7,8-tetrahydrofolate + NADP(+) = (6R)-5,10-methenyltetrahydrofolate + NADPH. It carries out the reaction (6R)-5,10-methenyltetrahydrofolate + H2O = (6R)-10-formyltetrahydrofolate + H(+). It functions in the pathway one-carbon metabolism; tetrahydrofolate interconversion. Catalyzes the oxidation of 5,10-methylenetetrahydrofolate to 5,10-methenyltetrahydrofolate and then the hydrolysis of 5,10-methenyltetrahydrofolate to 10-formyltetrahydrofolate. The chain is Bifunctional protein FolD from Staphylococcus carnosus (strain TM300).